The chain runs to 1323 residues: Receptor tyrosine-protein kinase let-23 (1323 aa).

The signal sequence occupies residues 1 to 20 (MRYPPSIGSILLIIPIFLTF). Residues 21–818 (FGNSNAQLWK…DIASRQRKTR (798 aa)) lie on the Extracellular side of the membrane. 2 N-linked (GlcNAc...) asparagine glycosylation sites follow: Asn-91 and Asn-169. 11 disulfides stabilise this stretch: Cys-220–Cys-228, Cys-224–Cys-236, Cys-244–Cys-251, Cys-248–Cys-262, Cys-263–Cys-271, Cys-267–Cys-279, Cys-282–Cys-291, Cys-295–Cys-322, Cys-326–Cys-337, Cys-341–Cys-356, and Cys-359–Cys-364. The N-linked (GlcNAc...) asparagine glycan is linked to Asn-255. Asn-376 is a glycosylation site (N-linked (GlcNAc...) asparagine). Intrachain disulfides connect Cys-520–Cys-529, Cys-524–Cys-537, Cys-540–Cys-549, Cys-553–Cys-567, Cys-570–Cys-577, Cys-574–Cys-585, Cys-588–Cys-604, Cys-608–Cys-620, Cys-623–Cys-632, Cys-627–Cys-644, Cys-647–Cys-660, Cys-670–Cys-693, Cys-696–Cys-703, Cys-700–Cys-715, Cys-717–Cys-731, Cys-735–Cys-750, Cys-753–Cys-763, Cys-757–Cys-771, Cys-774–Cys-787, and Cys-791–Cys-805. N-linked (GlcNAc...) asparagine glycosylation is present at Asn-561. Residue Asn-655 is glycosylated (N-linked (GlcNAc...) asparagine). Asn-746 is a glycosylation site (N-linked (GlcNAc...) asparagine). Asn-776 carries an N-linked (GlcNAc...) asparagine glycan. A helical transmembrane segment spans residues 819–839 (MVIIGSVLFGFAVMFLFILLV). Residues 840–1323 (YWRCQRIGKK…EEVSQKETCL (484 aa)) are Cytoplasmic-facing. The 268-residue stretch at 885 to 1152 (TKLDKKLGAG…EFCKVPQLFL (268 aa)) folds into the Protein kinase domain. ATP-binding positions include 891 to 899 (LGAGAFGTV) and Lys-919. The active-site Proton acceptor is Asp-1010. The segment covering 1265-1289 (GQTELSPSNGDYYNQPNTPSSSSGY) has biased composition (polar residues). Positions 1265–1323 (GQTELSPSNGDYYNQPNTPSSSSGYYNEPHLKTKKPETSEEAEAVQYENEEVSQKETCL) are disordered. Residues 1293–1302 (PHLKTKKPET) show a composition bias toward basic and acidic residues. A compositionally biased stretch (acidic residues) spans 1303-1315 (SEEAEAVQYENEE).

It belongs to the protein kinase superfamily. Tyr protein kinase family. EGF receptor subfamily. Expressed in vulval precursor cells (at protein level). Expressed in ALA neurons, 2 ventral head neurons, a single neuron in the tail, pharyngeal-intestinal valve and posterior arcade epithelial cells.

Its subcellular location is the apical cell membrane. The protein resides in the basolateral cell membrane. It carries out the reaction L-tyrosyl-[protein] + ATP = O-phospho-L-tyrosyl-[protein] + ADP + H(+). Tyrosine-protein kinase receptor which, upon binding ligand lin-3, activates 2 signaling cascades: the let-60/Ras and MAP kinase signaling pathway and the let-60-independent phospholipase C-mediated Ca(2+) signaling pathway. Each pathway regulates distinct functions. By activating let-60/Ras, regulates larval development, induction of vulva cell precursors during vulva development, male spicule formation and posterior development of the epidermis. Probably by activating phospholipase plc-3 and inositol 1,4,5-trisphosphate receptor itr-1 signaling cascade downstream of ligand lin-3, plays a role in ovulation by promoting ovulatory gonadal sheath cell contractions. Probably by regulating neuronal transmission in ALA neurons, mediates, independently of let-60/Ras, the decrease in pharyngeal pumping and locomotion during the quiescent state that precedes each larval molt, downstream of lin-3 and upstream of plc-3. The polypeptide is Receptor tyrosine-protein kinase let-23 (Caenorhabditis elegans).